Consider the following 1289-residue polypeptide: Trafficking protein particle complex II-specific subunit 120 (1289 aa).

Positions 354-365 (STGISPVDSNSK) are enriched in polar residues. Residues 354–374 (STGISPVDSNSKATASTTASS) are disordered. A phosphoserine mark is found at serine 379 and serine 387.

This sequence belongs to the TRS120 family. In terms of assembly, part of the multisubunit TRAPP (transport protein particle) II complex composed of BET3, BET5, TRS20, TRS23, TRS31, TRS33, TRS65, TRS120 and TRS130. Interacts directly with TRS65.

The protein resides in the golgi apparatus. It is found in the cis-Golgi network. In terms of biological role, specific subunit of the TRAPP II complex, a highly conserved vesicle tethering complex that functions in the late Golgi as a guanine nucleotide exchanger (GEF) for the Golgi YPT1 GTPase. TRS120 plays a role in the YPT GEF activity of TRAPP II in concert with the two other TRAPP II-specific subunits TRS65 and TRS130. The polypeptide is Trafficking protein particle complex II-specific subunit 120 (TRS120) (Saccharomyces cerevisiae (strain ATCC 204508 / S288c) (Baker's yeast)).